Consider the following 439-residue polypeptide: Ribosomal protein uS12 methylthiotransferase RimO (439 aa).

Residues P4–P114 enclose the MTTase N-terminal domain. The [4Fe-4S] cluster site is built by C13, C49, C78, C147, C151, and C154. Residues L133–A370 enclose the Radical SAM core domain. A TRAM domain is found at S373–A439.

This sequence belongs to the methylthiotransferase family. RimO subfamily. [4Fe-4S] cluster serves as cofactor.

The protein resides in the cytoplasm. The enzyme catalyses L-aspartate(89)-[ribosomal protein uS12]-hydrogen + (sulfur carrier)-SH + AH2 + 2 S-adenosyl-L-methionine = 3-methylsulfanyl-L-aspartate(89)-[ribosomal protein uS12]-hydrogen + (sulfur carrier)-H + 5'-deoxyadenosine + L-methionine + A + S-adenosyl-L-homocysteine + 2 H(+). Functionally, catalyzes the methylthiolation of an aspartic acid residue of ribosomal protein uS12. The polypeptide is Ribosomal protein uS12 methylthiotransferase RimO (Bordetella parapertussis (strain 12822 / ATCC BAA-587 / NCTC 13253)).